We begin with the raw amino-acid sequence, 339 residues long: Dihydroorotase (339 aa).

2 residues coordinate Zn(2+): His-12 and His-14. Substrate is bound by residues 14–16 (HVR) and Asn-40. Positions 94, 133, 167, and 239 each coordinate Zn(2+). Residue Lys-94 is modified to N6-carboxylysine. His-133 provides a ligand contact to substrate. Asp-239 is an active-site residue. Substrate-binding residues include His-243 and Ala-255.

Belongs to the metallo-dependent hydrolases superfamily. DHOase family. Class II DHOase subfamily. Homodimer. Zn(2+) serves as cofactor.

It catalyses the reaction (S)-dihydroorotate + H2O = N-carbamoyl-L-aspartate + H(+). Its pathway is pyrimidine metabolism; UMP biosynthesis via de novo pathway; (S)-dihydroorotate from bicarbonate: step 3/3. Catalyzes the reversible cyclization of carbamoyl aspartate to dihydroorotate. The protein is Dihydroorotase of Helicobacter pylori (strain J99 / ATCC 700824) (Campylobacter pylori J99).